A 572-amino-acid chain; its full sequence is 2-isopropylmalate synthase (572 aa).

One can recognise a Pyruvate carboxyltransferase domain in the interval 31–305 (PIWMSTDLRD…DPGLDFSNIN (275 aa)). Residues D40, H244, H246, and N280 each contribute to the Mg(2+) site. A regulatory domain region spans residues 437–572 (NATPVHYVGH…MNDATESVGV (136 aa)).

It belongs to the alpha-IPM synthase/homocitrate synthase family. LeuA type 2 subfamily. Homodimer. The cofactor is Mg(2+).

Its subcellular location is the cytoplasm. It catalyses the reaction 3-methyl-2-oxobutanoate + acetyl-CoA + H2O = (2S)-2-isopropylmalate + CoA + H(+). The protein operates within amino-acid biosynthesis; L-leucine biosynthesis; L-leucine from 3-methyl-2-oxobutanoate: step 1/4. Functionally, catalyzes the condensation of the acetyl group of acetyl-CoA with 3-methyl-2-oxobutanoate (2-ketoisovalerate) to form 3-carboxy-3-hydroxy-4-methylpentanoate (2-isopropylmalate). This Paraburkholderia xenovorans (strain LB400) protein is 2-isopropylmalate synthase.